Consider the following 163-residue polypeptide: 6,7-dimethyl-8-ribityllumazine synthase 1 (163 aa).

5-amino-6-(D-ribitylamino)uracil contacts are provided by residues F27, 58-60 (ALE), and 87-89 (CVV). Residue 92 to 93 (ET) participates in (2S)-2-hydroxy-3-oxobutyl phosphate binding. The active-site Proton donor is H95. N120 contributes to the 5-amino-6-(D-ribitylamino)uracil binding site. R134 serves as a coordination point for (2S)-2-hydroxy-3-oxobutyl phosphate.

Belongs to the DMRL synthase family.

The catalysed reaction is (2S)-2-hydroxy-3-oxobutyl phosphate + 5-amino-6-(D-ribitylamino)uracil = 6,7-dimethyl-8-(1-D-ribityl)lumazine + phosphate + 2 H2O + H(+). Its pathway is cofactor biosynthesis; riboflavin biosynthesis; riboflavin from 2-hydroxy-3-oxobutyl phosphate and 5-amino-6-(D-ribitylamino)uracil: step 1/2. Catalyzes the formation of 6,7-dimethyl-8-ribityllumazine by condensation of 5-amino-6-(D-ribitylamino)uracil with 3,4-dihydroxy-2-butanone 4-phosphate. This is the penultimate step in the biosynthesis of riboflavin. The sequence is that of 6,7-dimethyl-8-ribityllumazine synthase 1 from Rhodopseudomonas palustris (strain ATCC BAA-98 / CGA009).